The primary structure comprises 553 residues: Probable cytochrome P450 301a1, mitochondrial (553 aa).

C502 is a binding site for heme.

It belongs to the cytochrome P450 family. Heme is required as a cofactor.

Its subcellular location is the mitochondrion membrane. The chain is Probable cytochrome P450 301a1, mitochondrial (Cyp301a1) from Drosophila melanogaster (Fruit fly).